Here is a 445-residue protein sequence, read N- to C-terminus: MKEILDAIQSQTATSADFAALPLPDSYRAITVHKDETEMFAGLSTRDKDPRKSIHLDDVPVPELGPGEALVAVMASSVNYNSVWTSIFEPVSTFNFLERYGRLSDLSKRHDLPYHIIGSDLAGVVLRTGPGVNSWKPGDEVVAHCLSVELESSDGHNDTMLDPEQRIWGFETNFGGLAEIALVKSNQLMPKPDHLSWEEAAAPGLVNSTAYRQLVSRNGAGMKQGDNVLIWGASGGLGSYATQFALAGGANPICVVSSEQKADICRSMGAEAIIDRNAEGYKFWKDETTQDPKEWKRFGKRIREFTGGEDIDIVFEHPGRETFGASVYVTRKGGTITTCASTSGYMHEYDNRYLWMSLKRIIGSHFANYREAWEANRLVAKGKIHPTLSKVYSLEDTGQAAYDVHRNLHQGKVGVLALAPREGLGVRDEEKRAQHIDAINRFRNI.

Glu149 contacts Zn(2+).

The protein belongs to the zinc-containing alcohol dehydrogenase family. Crotonyl-CoA carboxylase/reductase subfamily. As to quaternary structure, homodimer. Zn(2+) serves as cofactor.

The catalysed reaction is butanoyl-CoA + NADP(+) = (2E)-butenoyl-CoA + NADPH + H(+). Its activity is regulated as follows. Inhibited by NADPH at concentrations above 200 uM, by MgCl (30%), by ZnCl(2) (55%), and by CoCl, MnCl and CaCl (100%). Also inhibited by iodoacetamide, N-ethylmaleamide, the thiol group inhibitor beta-chloromercuribenzoate, palmitoyl-CoA and myristoyl-CoA. In terms of biological role, catalyzes the conversion of crotonyl-CoA to butyryl-CoA. It uses only NADP as electron donor. May have a role in providing butyryl-CoA as a starter unit for straight-chain fatty acid biosynthesis. The protein is Crotonyl-CoA reductase (ccrA2) of Streptomyces avermitilis (strain ATCC 31267 / DSM 46492 / JCM 5070 / NBRC 14893 / NCIMB 12804 / NRRL 8165 / MA-4680).